Consider the following 145-residue polypeptide: D-aminoacyl-tRNA deacylase (145 aa).

The Gly-cisPro motif, important for rejection of L-amino acids motif lies at 137 to 138 (GP).

The protein belongs to the DTD family. As to quaternary structure, homodimer.

Its subcellular location is the cytoplasm. The catalysed reaction is glycyl-tRNA(Ala) + H2O = tRNA(Ala) + glycine + H(+). It carries out the reaction a D-aminoacyl-tRNA + H2O = a tRNA + a D-alpha-amino acid + H(+). An aminoacyl-tRNA editing enzyme that deacylates mischarged D-aminoacyl-tRNAs. Also deacylates mischarged glycyl-tRNA(Ala), protecting cells against glycine mischarging by AlaRS. Acts via tRNA-based rather than protein-based catalysis; rejects L-amino acids rather than detecting D-amino acids in the active site. By recycling D-aminoacyl-tRNA to D-amino acids and free tRNA molecules, this enzyme counteracts the toxicity associated with the formation of D-aminoacyl-tRNA entities in vivo and helps enforce protein L-homochirality. This is D-aminoacyl-tRNA deacylase from Psychromonas ingrahamii (strain DSM 17664 / CCUG 51855 / 37).